Reading from the N-terminus, the 211-residue chain is Protein-methionine-sulfoxide reductase heme-binding subunit MsrQ (211 aa).

The next 6 helical transmembrane spans lie at 8–28 (VIWLKVCLHLAGLLPFLWLVW), 54–74 (FLLAALLITPLARYAKQPLLI), 82–102 (LWCFAWATLHLTSYALLELGV), 116–136 (PYLTLGIISWVILLALAFTST), 153–173 (FVYLVAILAPIHYLWSVKIIS), and 178–198 (IYAGLAVLLLALRYKKLLSLF).

It belongs to the MsrQ family. In terms of assembly, heterodimer of a catalytic subunit (MsrP) and a heme-binding subunit (MsrQ). It depends on FMN as a cofactor. Heme b is required as a cofactor.

It localises to the cell inner membrane. Functionally, part of the MsrPQ system that repairs oxidized periplasmic proteins containing methionine sulfoxide residues (Met-O), using respiratory chain electrons. Thus protects these proteins from oxidative-stress damage caused by reactive species of oxygen and chlorine generated by the host defense mechanisms. MsrPQ is essential for the maintenance of envelope integrity under bleach stress, rescuing a wide series of structurally unrelated periplasmic proteins from methionine oxidation, including the primary periplasmic chaperone SurA and the lipoprotein Pal. MsrQ provides electrons for reduction to the reductase catalytic subunit MsrP, using the quinone pool of the respiratory chain. This is Protein-methionine-sulfoxide reductase heme-binding subunit MsrQ from Shigella flexneri.